A 201-amino-acid chain; its full sequence is Prostamide/prostaglandin F synthase (201 aa).

This sequence belongs to the peroxiredoxin-like PRXL2 family. Prostamide/prostaglandin F synthase subfamily.

It is found in the cytoplasm. It localises to the cytosol. The enzyme catalyses prostaglandin H2 + [thioredoxin]-dithiol = prostaglandin F2alpha + [thioredoxin]-disulfide. It catalyses the reaction prostamide F2alpha + [thioredoxin]-disulfide = prostamide H2 + [thioredoxin]-dithiol. Its function is as follows. Catalyzes the reduction of prostaglandin-ethanolamide H(2) (prostamide H(2)) to prostamide F(2alpha) with NADPH as proton donor. Also able to reduce prostaglandin H(2) to prostaglandin F(2alpha). This chain is Prostamide/prostaglandin F synthase (prxl2b), found in Xenopus tropicalis (Western clawed frog).